The chain runs to 147 residues: UPF0306 protein YpAngola_A4021 (147 aa).

Belongs to the UPF0306 family.

The polypeptide is UPF0306 protein YpAngola_A4021 (Yersinia pestis bv. Antiqua (strain Angola)).